A 446-amino-acid chain; its full sequence is D(1A) dopamine receptor (446 aa).

The Extracellular segment spans residues 1–22 (MAPNTSTMDEAGLPAERDFSFR). Asn4 carries N-linked (GlcNAc...) asparagine glycosylation. The helical transmembrane segment at 23–48 (ILTACFLSLLILSTLLGNTLVCAAVI) threads the bilayer. Residues 49-59 (RFRHLRSKVTN) are Cytoplasmic-facing. Residues 60–86 (FFVISLAVSDLLVAVLVMPWKAVAEIA) traverse the membrane as a helical segment. Topologically, residues 87 to 95 (GFWPLGPFC) are extracellular. An intrachain disulfide couples Cys95 to Cys186. A helical membrane pass occupies residues 96 to 118 (NIWVAFDIMCSTASILNLCVISV). Over 119–137 (DRYWAISSPFQYERKMTPK) the chain is Cytoplasmic. A helical membrane pass occupies residues 138 to 162 (AAFILISVAWTLSVLISFIPVQLSW). The Extracellular portion of the chain corresponds to 163–192 (HKAKPTWPLDGNFTSLEDTEDDNCDTRLSR). The helical transmembrane segment at 193–218 (TYAISSSLISFYIPVAIMIVTYTSIY) threads the bilayer. Residues 219-272 (RIAQKQIRRISALERAAVHAKNCQTTAGNGNPVECAQSESSFKMSFKRETKVLK) lie on the Cytoplasmic side of the membrane. The helical transmembrane segment at 273 to 299 (TLSVIMGVFVCCWLPFFISNCMVPFCG) threads the bilayer. The Extracellular segment spans residues 300-312 (SEETQPFCIDSIT). Residues 313-337 (FDVFVWFGWANSSLNPIIYAFNADF) traverse the membrane as a helical segment. Residues 338 to 446 (QKAFSTLLGC…PVTHSGQHST (109 aa)) lie on the Cytoplasmic side of the membrane. Residues Cys347 and Cys351 are each lipidated (S-palmitoyl cysteine).

Belongs to the G-protein coupled receptor 1 family. In terms of assembly, interacts with DNAJC14 via its C-terminus PubMed:11331877. Interacts with DRD2. Interacts with DORIP1. In terms of processing, N-glycosylated. As to expression, brain, in the striatum, the nucleus accumbens, and the olfactory tubercle.

It localises to the cell membrane. It is found in the endoplasmic reticulum membrane. The protein localises to the cell projection. Its subcellular location is the dendrite. The protein resides in the cilium membrane. It localises to the dendritic spine. Dopamine receptor whose activity is mediated by G proteins which activate adenylyl cyclase. The polypeptide is D(1A) dopamine receptor (Drd1) (Rattus norvegicus (Rat)).